Here is a 353-residue protein sequence, read N- to C-terminus: Fasciculation and elongation protein zeta-2 (353 aa).

The interval 19–49 (SLLDQENCNASPEPGAEAGAEAGGGADGFPA) is disordered. Positions 28-38 (ASPEPGAEAGA) are enriched in low complexity. A phosphoserine mark is found at Ser135, Ser176, and Ser195. Residues 214 to 286 (KRLSVSELNE…AKKKKKLKNG (73 aa)) are a coiled coil. Positions 271-300 (KEHKETAKKKKKLKNGSSQNGKNERSHMPG) are disordered.

The protein belongs to the zygin family. As to quaternary structure, homodimer; disulfide-linked. May form heterodimers with FEZ1. Interacts with synaptotagmin. As to expression, expressed in nonneural tissues, such as heart, lung, spleen, muscle, testis, placenta and melanocytes.

Its function is as follows. Involved in axonal outgrowth and fasciculation. This Homo sapiens (Human) protein is Fasciculation and elongation protein zeta-2 (FEZ2).